The following is a 229-amino-acid chain: Small ribosomal subunit protein uS3 (229 aa).

Residues 39 to 107 (IRKFLKKELY…EVFINIKEEK (69 aa)) enclose the KH type-2 domain.

This sequence belongs to the universal ribosomal protein uS3 family. In terms of assembly, part of the 30S ribosomal subunit. Forms a tight complex with proteins S10 and S14.

Functionally, binds the lower part of the 30S subunit head. Binds mRNA in the 70S ribosome, positioning it for translation. This chain is Small ribosomal subunit protein uS3, found in Nitratiruptor sp. (strain SB155-2).